We begin with the raw amino-acid sequence, 468 residues long: UDP-N-acetylmuramate--L-alanine ligase (468 aa).

114–120 contacts ATP; the sequence is GTHGKTT.

The protein belongs to the MurCDEF family.

The protein resides in the cytoplasm. It carries out the reaction UDP-N-acetyl-alpha-D-muramate + L-alanine + ATP = UDP-N-acetyl-alpha-D-muramoyl-L-alanine + ADP + phosphate + H(+). It functions in the pathway cell wall biogenesis; peptidoglycan biosynthesis. Cell wall formation. The protein is UDP-N-acetylmuramate--L-alanine ligase of Methylorubrum populi (strain ATCC BAA-705 / NCIMB 13946 / BJ001) (Methylobacterium populi).